Consider the following 670-residue polypeptide: MEETEKKIATQEGRLFSKMKVFLLSLTCACLTKSLSGVYMNSMLTQIERQFDISTSVAGLINGSFEIGNLFFIVFVSYFGTKLHRPVVIGIGCVIMGLGCLLMSLPHFFMGRYEYETTISPTGNLSSNSFLCMENRTQTLKPTQDPAECVKEMKSLMWICVMVGNIIRGIGETPIVPLGISYIEDFAKSENSPLYIGILEMGKVAGPIFGLLLGSYCAQIYVDIGSVNTDDLTITPSDTRWVGAWWIGFLVCAGVNILTSIPFFFLPKALPKKGQQENVAVTKDGKVEKYGGQAREENLGITKDFLTFMKRLFCNPIYMLFILTSVLQVNGFINKFTFLPKYLEQQYGKSTAEAIFLIGVYSLPPICLGYLIGGFIMKKFKITVKKAAYLAFCLSVFEYLLFLCHFMLTCDNAAVAGLTTSYKGVQHQLHVESKVLADCNTRCSCSTNTWDPVCGDNGVAYMSACLAGCKKFVGTGTNMVFQDCSCIQSLGNSSAVLGLCKKGPECANRLQYFLILTIIISFIYSLTAIPGYMVFLRCVKSEEKSLGVGLHTFCIRVFAGIPAPVYFGALIDRTCLHWGTLKCGQRGACRMYDINSFRHIYLGLPIALRGSSYLPAFFILILMRKFQFPGDIDSSATDHTEMMLGEKESEHTDVHGSPQVENDGELKTKL.

Over 1–20 (MEETEKKIATQEGRLFSKMK) the chain is Cytoplasmic. Residues 21–40 (VFLLSLTCACLTKSLSGVYM) traverse the membrane as a helical segment. The Extracellular segment spans residues 41–59 (NSMLTQIERQFDISTSVAG). Residues 60–80 (LINGSFEIGNLFFIVFVSYFG) form a helical membrane-spanning segment. Over 81 to 86 (TKLHRP) the chain is Cytoplasmic. A helical transmembrane segment spans residues 87–111 (VVIGIGCVIMGLGCLLMSLPHFFMG). Topologically, residues 112-155 (RYEYETTISPTGNLSSNSFLCMENRTQTLKPTQDPAECVKEMKS) are extracellular. N124 and N135 each carry an N-linked (GlcNAc...) asparagine glycan. A helical membrane pass occupies residues 156-184 (LMWICVMVGNIIRGIGETPIVPLGISYIE). Residues 185–203 (DFAKSENSPLYIGILEMGK) lie on the Cytoplasmic side of the membrane. A helical membrane pass occupies residues 204-224 (VAGPIFGLLLGSYCAQIYVDI). At 225–242 (GSVNTDDLTITPSDTRWV) the chain is on the extracellular side. Residues 243–267 (GAWWIGFLVCAGVNILTSIPFFFLP) traverse the membrane as a helical segment. The Cytoplasmic segment spans residues 268 to 311 (KALPKKGQQENVAVTKDGKVEKYGGQAREENLGITKDFLTFMKR). Residues 312 to 333 (LFCNPIYMLFILTSVLQVNGFI) traverse the membrane as a helical segment. Residues 334-353 (NKFTFLPKYLEQQYGKSTAE) are Extracellular-facing. The chain crosses the membrane as a helical span at residues 354–377 (AIFLIGVYSLPPICLGYLIGGFIM). Topologically, residues 378–381 (KKFK) are cytoplasmic. Residues 382 to 405 (ITVKKAAYLAFCLSVFEYLLFLCH) traverse the membrane as a helical segment. At 406-513 (FMLTCDNAAV…PECANRLQYF (108 aa)) the chain is on the extracellular side. Residues 433-488 (SKVLADCNTRCSCSTNTWDPVCGDNGVAYMSACLAGCKKFVGTGTNMVFQDCSCIQ) form the Kazal-like domain. 3 disulfide bridges follow: C439-C469, C445-C465, and C454-C486. N492 carries an N-linked (GlcNAc...) asparagine glycan. A helical membrane pass occupies residues 514–536 (LILTIIISFIYSLTAIPGYMVFL). The Cytoplasmic segment spans residues 537-545 (RCVKSEEKS). Residues 546 to 571 (LGVGLHTFCIRVFAGIPAPVYFGALI) traverse the membrane as a helical segment. The Extracellular segment spans residues 572 to 605 (DRTCLHWGTLKCGQRGACRMYDINSFRHIYLGLP). Residues 606-623 (IALRGSSYLPAFFILILM) form a helical membrane-spanning segment. Residues 624–670 (RKFQFPGDIDSSATDHTEMMLGEKESEHTDVHGSPQVENDGELKTKL) are Cytoplasmic-facing. A phosphoserine mark is found at S634 and S635. Basic and acidic residues predominate over residues 645–654 (GEKESEHTDV). The segment at 645 to 670 (GEKESEHTDVHGSPQVENDGELKTKL) is disordered.

This sequence belongs to the organo anion transporter (TC 2.A.60) family. In terms of assembly, binds to PDZK1. Interaction with PDZK1 is required for expression on hepatocyte surface. Glycosylated. As to expression, highly expressed in liver and kidney, and at lower levels in brain, lung, skeletal muscle and proximal colon.

It localises to the basolateral cell membrane. The catalysed reaction is estrone 3-sulfate(out) + hydrogencarbonate(in) = estrone 3-sulfate(in) + hydrogencarbonate(out). It catalyses the reaction taurocholate(out) + hydrogencarbonate(in) = taurocholate(in) + hydrogencarbonate(out). It carries out the reaction L-thyroxine(out) = L-thyroxine(in). The enzyme catalyses prostaglandin E2(out) = prostaglandin E2(in). The catalysed reaction is 17beta-estradiol 17-O-(beta-D-glucuronate)(out) = 17beta-estradiol 17-O-(beta-D-glucuronate)(in). It catalyses the reaction dehydroepiandrosterone 3-sulfate(out) = dehydroepiandrosterone 3-sulfate(in). Functionally, mediates the Na(+)-independent transport of organic anions such as steroid sulfate conjugates (dehydroepiandrosterone sulfate (DHEAS), 17-beta-glucuronosyl estradiol, estrone-3-sulfate), conjugated (taurocholate) and unconjugated (cholate) bile acids, prostaglandin E2 (PGE2) and L-thyroxine T4. Also capable of transporting sulfobromophthalein (BSP), ouabain and gadoxetate. Hydrogencarbonate/HCO3(-) acts as the probable counteranion that exchanges for organic anions. Shows a pH-sensitive substrate specificity which may be ascribed to the protonation state of the binding site and leads to a stimulation of substrate transport in an acidic microenvironment. This Rattus norvegicus (Rat) protein is Solute carrier organic anion transporter family member 1A1.